The chain runs to 237 residues: 2-C-methyl-D-erythritol 4-phosphate cytidylyltransferase (237 aa).

Belongs to the IspD/TarI cytidylyltransferase family. IspD subfamily.

It carries out the reaction 2-C-methyl-D-erythritol 4-phosphate + CTP + H(+) = 4-CDP-2-C-methyl-D-erythritol + diphosphate. Its pathway is isoprenoid biosynthesis; isopentenyl diphosphate biosynthesis via DXP pathway; isopentenyl diphosphate from 1-deoxy-D-xylulose 5-phosphate: step 2/6. Its function is as follows. Catalyzes the formation of 4-diphosphocytidyl-2-C-methyl-D-erythritol from CTP and 2-C-methyl-D-erythritol 4-phosphate (MEP). This chain is 2-C-methyl-D-erythritol 4-phosphate cytidylyltransferase, found in Paraburkholderia xenovorans (strain LB400).